The chain runs to 450 residues: MKRRYFGTDGIRGQSNIYPMTPDLAMRVGIAAGTIFHRGSHRHRVVIGKDTRLSGYMLENAMVAGFTAAGVDAFVLGPIPTPAVAMLTRSLRADIGVMISASHNPYEDNGIKLFGPDGYKLSDDLEMKIEDLLEKDMTAHLAKSENIGRAKRVDGVHDRYIEHAKRTLPRDVTLQGLRIAIDCANGAAYKVAPAVLWELGAEVVTIGNEPNGTNINLNCGSTSPVALQKKVDEVRADIGIALDGDADRVIIVDETGTIIDGDQLMAVIAESWAENQSLRGNGIVATVMSNLGLERFLEDRGMALARTAVGDRHVVEHMRQHNFNVGGEQSGHIVLSDYGTTGDGLVAALQILAVVKRTGKPVSEVCRRFEPVPQLLRNVRISGGKPLEDNQVRKAIADAESELARNGRLVIRPSGTEPLIRVMAEGDDRGQIERIVGGLIDVISSVRNAA.

Serine 102 functions as the Phosphoserine intermediate in the catalytic mechanism. Positions 102, 243, 245, and 247 each coordinate Mg(2+). The residue at position 102 (serine 102) is a Phosphoserine.

The protein belongs to the phosphohexose mutase family. The cofactor is Mg(2+). In terms of processing, activated by phosphorylation.

It catalyses the reaction alpha-D-glucosamine 1-phosphate = D-glucosamine 6-phosphate. Catalyzes the conversion of glucosamine-6-phosphate to glucosamine-1-phosphate. The chain is Phosphoglucosamine mutase from Rhizobium rhizogenes (strain K84 / ATCC BAA-868) (Agrobacterium radiobacter).